We begin with the raw amino-acid sequence, 775 residues long: Subtilisin-like protease SBT1.5 (775 aa).

Residues 1-19 (MAFFFYFFFLLTLSSPSSS) form the signal peptide. Residues 20–103 (ASSSNSLTYI…VIPEQVRHLH (84 aa)) constitute a propeptide, activation peptide. The region spanning 27-103 (TYIVHVDHEA…VIPEQVRHLH (77 aa)) is the Inhibitor I9 domain. The Peptidase S8 domain maps to 107–617 (SPEFLGLRST…SGHVHPTKAM (511 aa)). The active-site Charge relay system is the aspartate 137. An N-linked (GlcNAc...) asparagine glycan is attached at asparagine 196. The active-site Charge relay system is histidine 210. A PA domain is found at 367–459 (MYPLVYGGSL…VGASGGDEIR (93 aa)). The active-site Charge relay system is serine 549. N-linked (GlcNAc...) asparagine glycans are attached at residues asparagine 599, asparagine 638, and asparagine 762.

The protein belongs to the peptidase S8 family.

It localises to the secreted. The polypeptide is Subtilisin-like protease SBT1.5 (Arabidopsis thaliana (Mouse-ear cress)).